The sequence spans 473 residues: Bifunctional protein GlmU (473 aa).

Residues 1 to 226 (MRAPVAVVIL…AGEASGINDL (226 aa)) are pyrophosphorylase. UDP-N-acetyl-alpha-D-glucosamine is bound by residues 10–13 (LAAG), Lys24, Gln75, 80–81 (GT), 102–104 (YGD), Gly136, Glu151, Asn166, and Asn224. Position 104 (Asp104) interacts with Mg(2+). Position 224 (Asn224) interacts with Mg(2+). The linker stretch occupies residues 227-247 (VQLAEVEEAFQRRWARRLLQG). The segment at 248-473 (GLRLVAPHRF…TPASGGAKEE (226 aa)) is N-acetyltransferase. UDP-N-acetyl-alpha-D-glucosamine contacts are provided by Arg330 and Lys348. His360 functions as the Proton acceptor in the catalytic mechanism. UDP-N-acetyl-alpha-D-glucosamine is bound by residues Tyr363 and Asn374. Acetyl-CoA-binding positions include Ala377, 383–384 (NY), Ser402, Ala420, and Arg437. Residues 439 to 473 (RARTIPGWQHPGLTGRRGPPDDNDATPASGGAKEE) form a disordered region.

The protein in the N-terminal section; belongs to the N-acetylglucosamine-1-phosphate uridyltransferase family. This sequence in the C-terminal section; belongs to the transferase hexapeptide repeat family. Homotrimer. Requires Mg(2+) as cofactor.

The protein localises to the cytoplasm. It catalyses the reaction alpha-D-glucosamine 1-phosphate + acetyl-CoA = N-acetyl-alpha-D-glucosamine 1-phosphate + CoA + H(+). It carries out the reaction N-acetyl-alpha-D-glucosamine 1-phosphate + UTP + H(+) = UDP-N-acetyl-alpha-D-glucosamine + diphosphate. It participates in nucleotide-sugar biosynthesis; UDP-N-acetyl-alpha-D-glucosamine biosynthesis; N-acetyl-alpha-D-glucosamine 1-phosphate from alpha-D-glucosamine 6-phosphate (route II): step 2/2. The protein operates within nucleotide-sugar biosynthesis; UDP-N-acetyl-alpha-D-glucosamine biosynthesis; UDP-N-acetyl-alpha-D-glucosamine from N-acetyl-alpha-D-glucosamine 1-phosphate: step 1/1. Its pathway is bacterial outer membrane biogenesis; LPS lipid A biosynthesis. In terms of biological role, catalyzes the last two sequential reactions in the de novo biosynthetic pathway for UDP-N-acetylglucosamine (UDP-GlcNAc). The C-terminal domain catalyzes the transfer of acetyl group from acetyl coenzyme A to glucosamine-1-phosphate (GlcN-1-P) to produce N-acetylglucosamine-1-phosphate (GlcNAc-1-P), which is converted into UDP-GlcNAc by the transfer of uridine 5-monophosphate (from uridine 5-triphosphate), a reaction catalyzed by the N-terminal domain. This Halorhodospira halophila (strain DSM 244 / SL1) (Ectothiorhodospira halophila (strain DSM 244 / SL1)) protein is Bifunctional protein GlmU.